A 79-amino-acid polypeptide reads, in one-letter code: D-alanyl carrier protein (79 aa).

The Carrier domain occupies 2-79; the sequence is AEFKEQVLDI…MVIKKLEEIR (78 aa). S37 is modified (O-(pantetheine 4'-phosphoryl)serine).

The protein belongs to the DltC family. 4'-phosphopantetheine is transferred from CoA to a specific serine of apo-DCP.

The protein localises to the cytoplasm. It participates in cell wall biogenesis; lipoteichoic acid biosynthesis. Its function is as follows. Carrier protein involved in the D-alanylation of lipoteichoic acid (LTA). The loading of thioester-linked D-alanine onto DltC is catalyzed by D-alanine--D-alanyl carrier protein ligase DltA. The DltC-carried D-alanyl group is further transferred to cell membrane phosphatidylglycerol (PG) by forming an ester bond, probably catalyzed by DltD. D-alanylation of LTA plays an important role in modulating the properties of the cell wall in Gram-positive bacteria, influencing the net charge of the cell wall. The chain is D-alanyl carrier protein from Bacillus mycoides (strain KBAB4) (Bacillus weihenstephanensis).